Here is a 594-residue protein sequence, read N- to C-terminus: UvrABC system protein C (594 aa).

The GIY-YIG domain occupies 13-99 (NSSGVYQYFD…IKQLKPKYNI (87 aa)). The UVR domain occupies 205–240 (DRLIKELELKMERLSNNLRFEEALIYRDRIAKIQKI).

It belongs to the UvrC family. Interacts with UvrB in an incision complex.

The protein localises to the cytoplasm. In terms of biological role, the UvrABC repair system catalyzes the recognition and processing of DNA lesions. UvrC both incises the 5' and 3' sides of the lesion. The N-terminal half is responsible for the 3' incision and the C-terminal half is responsible for the 5' incision. The protein is UvrABC system protein C of Helicobacter pylori (strain ATCC 700392 / 26695) (Campylobacter pylori).